The chain runs to 467 residues: Asparagine--tRNA ligase (467 aa).

The protein belongs to the class-II aminoacyl-tRNA synthetase family. Homodimer.

Its subcellular location is the cytoplasm. The enzyme catalyses tRNA(Asn) + L-asparagine + ATP = L-asparaginyl-tRNA(Asn) + AMP + diphosphate + H(+). In Actinobacillus pleuropneumoniae serotype 5b (strain L20), this protein is Asparagine--tRNA ligase.